The chain runs to 452 residues: Trigger factor (452 aa).

In terms of domain architecture, PPIase FKBP-type spans 170–255 (GDRVTIDFTG…VKSVAAPGPL (86 aa)).

The protein belongs to the FKBP-type PPIase family. Tig subfamily.

It is found in the cytoplasm. The catalysed reaction is [protein]-peptidylproline (omega=180) = [protein]-peptidylproline (omega=0). In terms of biological role, involved in protein export. Acts as a chaperone by maintaining the newly synthesized protein in an open conformation. Functions as a peptidyl-prolyl cis-trans isomerase. The sequence is that of Trigger factor from Xanthobacter autotrophicus (strain ATCC BAA-1158 / Py2).